A 182-amino-acid polypeptide reads, in one-letter code: GTP cyclohydrolase 1 (182 aa).

Residues C73, H76, and C144 each coordinate Zn(2+).

Belongs to the GTP cyclohydrolase I family. As to quaternary structure, homomer.

The catalysed reaction is GTP + H2O = 7,8-dihydroneopterin 3'-triphosphate + formate + H(+). Its pathway is cofactor biosynthesis; 7,8-dihydroneopterin triphosphate biosynthesis; 7,8-dihydroneopterin triphosphate from GTP: step 1/1. The protein is GTP cyclohydrolase 1 of Hydrogenobaculum sp. (strain Y04AAS1).